The sequence spans 152 residues: Ribosome maturation factor RimP (152 aa).

The protein belongs to the RimP family.

It localises to the cytoplasm. In terms of biological role, required for maturation of 30S ribosomal subunits. The polypeptide is Ribosome maturation factor RimP (Porphyromonas gingivalis (strain ATCC BAA-308 / W83)).